Here is a 239-residue protein sequence, read N- to C-terminus: Skn-1 dependent zygotic transcript 1 protein (239 aa).

In terms of tissue distribution, expressed in mesendodermal precursor cells of embryos.

Functionally, may have a role in mesendoderm development during embryogenesis. The chain is Skn-1 dependent zygotic transcript 1 protein (sdz-1) from Caenorhabditis elegans.